A 158-amino-acid polypeptide reads, in one-letter code: Transcriptional regulator MraZ (158 aa).

SpoVT-AbrB domains are found at residues 7-54 (NIEA…PEEV) and 84-127 (VEII…AKER).

This sequence belongs to the MraZ family. Forms oligomers.

It localises to the cytoplasm. Its subcellular location is the nucleoid. The protein is Transcriptional regulator MraZ of Bacteroides fragilis (strain ATCC 25285 / DSM 2151 / CCUG 4856 / JCM 11019 / LMG 10263 / NCTC 9343 / Onslow / VPI 2553 / EN-2).